The following is a 343-amino-acid chain: Uroporphyrinogen decarboxylase (343 aa).

Residues 23 to 27, Asp73, Tyr149, Thr204, and His320 each bind substrate; that span reads RQAGR.

Belongs to the uroporphyrinogen decarboxylase family. As to quaternary structure, homodimer.

It is found in the cytoplasm. It carries out the reaction uroporphyrinogen III + 4 H(+) = coproporphyrinogen III + 4 CO2. It participates in porphyrin-containing compound metabolism; protoporphyrin-IX biosynthesis; coproporphyrinogen-III from 5-aminolevulinate: step 4/4. Functionally, catalyzes the decarboxylation of four acetate groups of uroporphyrinogen-III to yield coproporphyrinogen-III. The polypeptide is Uroporphyrinogen decarboxylase (Bradyrhizobium sp. (strain BTAi1 / ATCC BAA-1182)).